A 101-amino-acid polypeptide reads, in one-letter code: ATP-dependent Clp protease adapter protein ClpS 2 (101 aa).

It belongs to the ClpS family. Binds to the N-terminal domain of the chaperone ClpA.

Functionally, involved in the modulation of the specificity of the ClpAP-mediated ATP-dependent protein degradation. The chain is ATP-dependent Clp protease adapter protein ClpS 2 from Mesorhizobium japonicum (strain LMG 29417 / CECT 9101 / MAFF 303099) (Mesorhizobium loti (strain MAFF 303099)).